Reading from the N-terminus, the 645-residue chain is Protein FAM47B (645 aa).

Composition is skewed to basic and acidic residues over residues 1–11 (MGDRRPQDRPR), 238–251 (EPPETRASHLRVDP), and 288–299 (PETRVSHLHPEP). 2 disordered regions span residues 1–23 (MGDRRPQDRPRSQGMDSKPWYCD) and 168–321 (AREK…SLCP).

It belongs to the FAM47 family.

This is Protein FAM47B (FAM47B) from Homo sapiens (Human).